The chain runs to 406 residues: RILP-like protein 1 (406 aa).

A Phosphoserine modification is found at serine 7. The RH1 domain occupies 10-97 (AALSALEKNV…RVERMDRIEK (88 aa)). The residue at position 47 (cysteine 47) is an S-nitrosocysteine. A coiled-coil region spans residues 76 to 258 (ELDELRLELD…KLRERLQGEH (183 aa)). Disordered stretches follow at residues 255-280 (QGEHSQNGEEEEAEIQPQPDGEESIS) and 330-354 (EIEEENRIPQPPPITHPRTSPQPES). Serine 259 is subject to Phosphoserine. Residues 262–280 (GEEEEAEIQPQPDGEESIS) are compositionally biased toward acidic residues. Positions 294 to 359 (RPRFTLQELR…PQPESGIKRL (66 aa)) constitute an RH2 domain.

The protein belongs to the RILPL family. As to quaternary structure, interacts (when S-nitrosylated) with GAPDH. Interacts with RAB8A; interaction is dependent on the phosphorylation of 'Thr-72' of RAB8A. Interacts with RAB10 and RAB12; the interaction is dependent on the phosphorylation of 'Thr-73' of RAB10, and 'Ser-105' of RAB12. S-nitrosylation is required for the interaction with GAPDH.

Its subcellular location is the cytoplasm. It is found in the cytosol. The protein localises to the cell projection. It localises to the cilium. The protein resides in the cytoskeleton. Its subcellular location is the microtubule organizing center. It is found in the centrosome. The protein localises to the centriole. Its function is as follows. Neuroprotective protein, which acts by sequestring GAPDH in the cytosol and prevent the apoptotic function of GAPDH in the nucleus. Competes with SIAH1 for binding GAPDH. Does not regulate lysosomal morphology and distribution. Plays a role in the regulation of cell shape and polarity. Plays a role in cellular protein transport, including protein transport away from primary cilia. Binds to RAB10 following LRRK2-mediated RAB10 phosphorylation which leads to inhibition of ciliogenesis. The chain is RILP-like protein 1 (Rilpl1) from Mus musculus (Mouse).